A 338-amino-acid polypeptide reads, in one-letter code: Anthranilate phosphoribosyltransferase (338 aa).

5-phospho-alpha-D-ribose 1-diphosphate-binding positions include Gly-81, 84 to 85, Ser-89, 91 to 94, 109 to 117, and Ser-121; these read GD, NIST, and KHGNRSVSS. Gly-81 serves as a coordination point for anthranilate. A Mg(2+)-binding site is contributed by Ser-93. Asn-112 is an anthranilate binding site. Arg-167 serves as a coordination point for anthranilate. Residues Asp-226 and Glu-227 each coordinate Mg(2+).

It belongs to the anthranilate phosphoribosyltransferase family. As to quaternary structure, homodimer. Mg(2+) is required as a cofactor.

It carries out the reaction N-(5-phospho-beta-D-ribosyl)anthranilate + diphosphate = 5-phospho-alpha-D-ribose 1-diphosphate + anthranilate. Its pathway is amino-acid biosynthesis; L-tryptophan biosynthesis; L-tryptophan from chorismate: step 2/5. Its function is as follows. Catalyzes the transfer of the phosphoribosyl group of 5-phosphorylribose-1-pyrophosphate (PRPP) to anthranilate to yield N-(5'-phosphoribosyl)-anthranilate (PRA). The polypeptide is Anthranilate phosphoribosyltransferase (Thioalkalivibrio sulfidiphilus (strain HL-EbGR7)).